Consider the following 115-residue polypeptide: Phosphoribosyl-AMP cyclohydrolase (115 aa).

Asp-80 lines the Mg(2+) pocket. Cys-81 provides a ligand contact to Zn(2+). Mg(2+)-binding residues include Asp-82 and Asp-84. Residues Cys-97 and Cys-104 each contribute to the Zn(2+) site.

The protein belongs to the PRA-CH family. As to quaternary structure, homodimer. Mg(2+) is required as a cofactor. Requires Zn(2+) as cofactor.

It is found in the cytoplasm. The catalysed reaction is 1-(5-phospho-beta-D-ribosyl)-5'-AMP + H2O = 1-(5-phospho-beta-D-ribosyl)-5-[(5-phospho-beta-D-ribosylamino)methylideneamino]imidazole-4-carboxamide. Its pathway is amino-acid biosynthesis; L-histidine biosynthesis; L-histidine from 5-phospho-alpha-D-ribose 1-diphosphate: step 3/9. Its function is as follows. Catalyzes the hydrolysis of the adenine ring of phosphoribosyl-AMP. The sequence is that of Phosphoribosyl-AMP cyclohydrolase from Rhodococcus erythropolis (strain PR4 / NBRC 100887).